We begin with the raw amino-acid sequence, 464 residues long: Asparagine--tRNA ligase (464 aa).

The protein belongs to the class-II aminoacyl-tRNA synthetase family. Homodimer.

The protein resides in the cytoplasm. The catalysed reaction is tRNA(Asn) + L-asparagine + ATP = L-asparaginyl-tRNA(Asn) + AMP + diphosphate + H(+). In Xanthomonas axonopodis pv. citri (strain 306), this protein is Asparagine--tRNA ligase.